Reading from the N-terminus, the 276-residue chain is L-aminoadipate-semialdehyde dehydrogenase-phosphopantetheinyl transferase (276 aa).

The protein belongs to the P-Pant transferase superfamily. AcpS family.

The catalysed reaction is apo-[ACP] + CoA = holo-[ACP] + adenosine 3',5'-bisphosphate + H(+). Its function is as follows. Catalyzes the transfer of a 4'-phosphopantetheine moiety from coenzyme A to a serine residue of acceptor proteins, such as alpha-aminoadipate reductase. Necessary for alpha-aminoadipate reductase activity. This is L-aminoadipate-semialdehyde dehydrogenase-phosphopantetheinyl transferase (LYS5) from Eremothecium gossypii (strain ATCC 10895 / CBS 109.51 / FGSC 9923 / NRRL Y-1056) (Yeast).